The primary structure comprises 616 residues: Chaperone protein HscA (616 aa).

Belongs to the heat shock protein 70 family.

Functionally, chaperone involved in the maturation of iron-sulfur cluster-containing proteins. Has a low intrinsic ATPase activity which is markedly stimulated by HscB. Involved in the maturation of IscU. In Escherichia coli O45:K1 (strain S88 / ExPEC), this protein is Chaperone protein HscA.